Here is a 386-residue protein sequence, read N- to C-terminus: Bifunctional chorismate mutase/prephenate dehydratase (386 aa).

Positions 1–92 (MTSENPLLAL…DSVLTQQALL (92 aa)) constitute a Chorismate mutase domain. Substrate contacts are provided by Arg11, Arg28, Lys39, Asp48, Glu52, Ser84, and Gln88. A Prephenate dehydratase domain is found at 105 to 285 (RIAFLGPKGS…NFTRFVVLAR (181 aa)). An ACT domain is found at 299 to 376 (TLLMATGQQA…RSMKVLGCYP (78 aa)).

It localises to the cytoplasm. The enzyme catalyses chorismate = prephenate. It catalyses the reaction prephenate + H(+) = 3-phenylpyruvate + CO2 + H2O. It functions in the pathway amino-acid biosynthesis; L-phenylalanine biosynthesis; phenylpyruvate from prephenate: step 1/1. Its pathway is metabolic intermediate biosynthesis; prephenate biosynthesis; prephenate from chorismate: step 1/1. In terms of biological role, catalyzes the Claisen rearrangement of chorismate to prephenate and the decarboxylation/dehydration of prephenate to phenylpyruvate. The protein is Bifunctional chorismate mutase/prephenate dehydratase (pheA) of Escherichia coli O157:H7.